The chain runs to 417 residues: Riboflavin biosynthesis protein RibBA (417 aa).

Residues 1-204 form a DHBP synthase region; the sequence is MTRLDSIERA…IADLIEWRRK (204 aa). D-ribulose 5-phosphate contacts are provided by residues 28-29, aspartate 33, 141-145, and glutamate 165; these read RE and RPGHT. Glutamate 29 is a Mg(2+) binding site. Histidine 144 is a Mg(2+) binding site. Residues 205–417 are GTP cyclohydrolase II; it reads HEKHVQRIAE…LDDHPEADGA (213 aa). 259-263 contributes to the GTP binding site; sequence RVHSE. Zn(2+) is bound by residues cysteine 264, cysteine 275, and cysteine 277. GTP is bound by residues glutamine 280, 303-305, and threonine 325; that span reads EGR. Residue aspartate 337 is the Proton acceptor; for GTP cyclohydrolase activity of the active site. Arginine 339 (nucleophile; for GTP cyclohydrolase activity) is an active-site residue. Threonine 360 and lysine 365 together coordinate GTP.

It in the N-terminal section; belongs to the DHBP synthase family. The protein in the C-terminal section; belongs to the GTP cyclohydrolase II family. It depends on Mg(2+) as a cofactor. The cofactor is Mn(2+). Zn(2+) serves as cofactor.

The catalysed reaction is D-ribulose 5-phosphate = (2S)-2-hydroxy-3-oxobutyl phosphate + formate + H(+). The enzyme catalyses GTP + 4 H2O = 2,5-diamino-6-hydroxy-4-(5-phosphoribosylamino)-pyrimidine + formate + 2 phosphate + 3 H(+). The protein operates within cofactor biosynthesis; riboflavin biosynthesis; 2-hydroxy-3-oxobutyl phosphate from D-ribulose 5-phosphate: step 1/1. It participates in cofactor biosynthesis; riboflavin biosynthesis; 5-amino-6-(D-ribitylamino)uracil from GTP: step 1/4. Its function is as follows. Catalyzes the conversion of D-ribulose 5-phosphate to formate and 3,4-dihydroxy-2-butanone 4-phosphate. Catalyzes the conversion of GTP to 2,5-diamino-6-ribosylamino-4(3H)-pyrimidinone 5'-phosphate (DARP), formate and pyrophosphate. The sequence is that of Riboflavin biosynthesis protein RibBA from Mycobacteroides abscessus (strain ATCC 19977 / DSM 44196 / CCUG 20993 / CIP 104536 / JCM 13569 / NCTC 13031 / TMC 1543 / L948) (Mycobacterium abscessus).